The chain runs to 272 residues: Putative hydro-lyase BRADO2538 (272 aa).

It belongs to the D-glutamate cyclase family.

In Bradyrhizobium sp. (strain ORS 278), this protein is Putative hydro-lyase BRADO2538.